The primary structure comprises 188 residues: UPF0200 protein M164_1169 (188 aa).

15–22 (GMPGSGKS) contributes to the ATP binding site.

This sequence belongs to the UPF0200 family.

The polypeptide is UPF0200 protein M164_1169 (Saccharolobus islandicus (strain M.16.4 / Kamchatka #3) (Sulfolobus islandicus)).